A 506-amino-acid polypeptide reads, in one-letter code: Histidine ammonia-lyase (506 aa).

The 5-imidazolinone (Ala-Gly) cross-link spans 143–145 (ASG). Ser144 is subject to 2,3-didehydroalanine (Ser).

It belongs to the PAL/histidase family. Post-translationally, contains an active site 4-methylidene-imidazol-5-one (MIO), which is formed autocatalytically by cyclization and dehydration of residues Ala-Ser-Gly.

It is found in the cytoplasm. It carries out the reaction L-histidine = trans-urocanate + NH4(+). It functions in the pathway amino-acid degradation; L-histidine degradation into L-glutamate; N-formimidoyl-L-glutamate from L-histidine: step 1/3. The protein is Histidine ammonia-lyase of Salmonella schwarzengrund (strain CVM19633).